Reading from the N-terminus, the 487-residue chain is Sodium-coupled neutral amino acid symporter 1 (487 aa).

Over 1-74 (MMHFKSGLEL…EYIPGTTSLG (74 aa)) the chain is Cytoplasmic. Phosphoserine is present on Ser6. A Phosphothreonine modification is found at Thr11. Ser25, Ser28, Ser49, and Ser52 each carry phosphoserine. Thr54 is modified (phosphothreonine). Ser56 carries the post-translational modification Phosphoserine. A helical membrane pass occupies residues 75–97 (MSVFNLSNAIMGSGILGLAFALA). Residues 98 to 112 (NTGILLFLVLLTSVT) lie on the Extracellular side of the membrane. The helical transmembrane segment at 113–133 (LLSIYSINLLLICSKETGCMV) threads the bilayer. At 134–147 (YEKLGEQVFGTTGK) the chain is on the cytoplasmic side. Residues 148–168 (FVIFGATSLQNTGAMLSYLFI) form a helical membrane-spanning segment. Residues 169–188 (VKNELPSAIKFLMGKEETFS) are Extracellular-facing. Residues 189 to 211 (AWYVDGRVLVVIVTFGIILPLCL) traverse the membrane as a helical segment. Residues 212-216 (LKNLG) lie on the Cytoplasmic side of the membrane. A helical membrane pass occupies residues 217-237 (YLGYTSGFSLSCMVFFLIVVI). The Extracellular portion of the chain corresponds to 238 to 275 (YKKFQIPCIVPELNSTISANSTNADTCTPKYVTFNSKT). A disulfide bridge links Cys245 with Cys264. N-linked (GlcNAc...) asparagine glycans are attached at residues Asn251 and Asn257. The chain crosses the membrane as a helical span at residues 276–296 (VYALPTIAFAFVCHPSVLPIY). The Cytoplasmic segment spans residues 297 to 312 (SELKDRSQKKMQMVSN). A helical membrane pass occupies residues 313 to 333 (ISFFAMFVMYFLTAIFGYLTF). At 334-350 (YDNVQSDLLHKYQSKDD) the chain is on the extracellular side. A helical membrane pass occupies residues 351 to 371 (ILILTVRLAVIVAVILTVPVL). The Cytoplasmic segment spans residues 372–393 (FFTVRSSLFELAKKTKFNLCRH). A helical transmembrane segment spans residues 394–414 (TVVTCILLVVINLLVIFIPSM). Residues 415–416 (KD) are Extracellular-facing. Residues 417–437 (IFGVVGVTSANMLIFILPSSL) form a helical membrane-spanning segment. Residues 438–452 (YLKITDQDGDKGTQR) lie on the Cytoplasmic side of the membrane. The chain crosses the membrane as a helical span at residues 453–473 (IWAALFLGLGVLFSLVSIPLV). The Extracellular segment spans residues 474-487 (IYDWACSSSSDEGH).

The protein belongs to the amino acid/polyamine transporter 2 family. In terms of processing, N-glycosylation plays an important role in the L-glutamine transport. Expressed in the cerebral cortex by pyramidal and GABAergic neurons, astrocytes and other non-neuronal cells (at protein level). Expressed in placenta, heart, lung, skeletal muscle, spleen, stomach and testis. Highly expressed in cytotrophoblast cells from term placenta.

It localises to the cell membrane. It carries out the reaction L-glutamine(in) + Na(+)(in) = L-glutamine(out) + Na(+)(out). The catalysed reaction is L-alanine(in) + Na(+)(in) = L-alanine(out) + Na(+)(out). The enzyme catalyses L-asparagine(in) + Na(+)(in) = L-asparagine(out) + Na(+)(out). It catalyses the reaction L-histidine(in) + Na(+)(in) = L-histidine(out) + Na(+)(out). It carries out the reaction L-serine(in) + Na(+)(in) = L-serine(out) + Na(+)(out). The catalysed reaction is L-cysteine(in) + Na(+)(in) = L-cysteine(out) + Na(+)(out). The enzyme catalyses L-methionine(in) + Na(+)(in) = L-methionine(out) + Na(+)(out). It catalyses the reaction glycine(in) + Na(+)(in) = glycine(out) + Na(+)(out). It carries out the reaction L-threonine(in) + Na(+)(in) = L-threonine(out) + Na(+)(out). The catalysed reaction is L-proline(in) + Na(+)(in) = L-proline(out) + Na(+)(out). With respect to regulation, inhibited by alpha-(methylamino)isobutyric acid (MeAIB). Inhibited by lithium, potassium, choline ions, N-methylglucamine. The pH dependence has an allosteric effect on the transport. In terms of biological role, symporter that cotransports short-chain neutral amino acids and sodium ions from the extraccellular to the intracellular side of the cell membrane. The transport is elctrogenic, pH dependent and driven by the Na(+) electrochemical gradient. Participates in the astroglia-derived glutamine transport into GABAergic interneurons for neurotransmitter GABA de novo synthesis. May also contributes to amino acid transport in placental trophoblasts. Also regulates synaptic plasticity. This Homo sapiens (Human) protein is Sodium-coupled neutral amino acid symporter 1 (SLC38A1).